The following is a 158-amino-acid chain: NAD(P)H-quinone oxidoreductase subunit J, chloroplastic (158 aa).

The protein belongs to the complex I 30 kDa subunit family. In terms of assembly, NDH is composed of at least 16 different subunits, 5 of which are encoded in the nucleus.

The protein resides in the plastid. Its subcellular location is the chloroplast thylakoid membrane. It carries out the reaction a plastoquinone + NADH + (n+1) H(+)(in) = a plastoquinol + NAD(+) + n H(+)(out). It catalyses the reaction a plastoquinone + NADPH + (n+1) H(+)(in) = a plastoquinol + NADP(+) + n H(+)(out). Its function is as follows. NDH shuttles electrons from NAD(P)H:plastoquinone, via FMN and iron-sulfur (Fe-S) centers, to quinones in the photosynthetic chain and possibly in a chloroplast respiratory chain. The immediate electron acceptor for the enzyme in this species is believed to be plastoquinone. Couples the redox reaction to proton translocation, and thus conserves the redox energy in a proton gradient. The polypeptide is NAD(P)H-quinone oxidoreductase subunit J, chloroplastic (Dioscorea elephantipes (Elephant's foot yam)).